The sequence spans 981 residues: MDGFAGSLDDSISAASTSDVQDRLSALESRVQQQEDEITVLKAALADVLRRLAISEDHVASVKKSVSSKGQPSPRAVIPMSCITNGSGANRKPSHTSAVSIAGKETLSSAAKSGTEKKKEKPQGQREKKEESHSNDQSPQIRASPSPQPSSQPLQIHRQTPESKNATPTKSIKRPSPAEKSHNSWENSDDSRNKLSKIPSTPKLIPKVTKTADKHKDVIINQEGEYIKMFMRGRPITMFIPSDVDNYDDIRTELPPEKLKLEWAYGYRGKDCRANVYLLPTGKIVYFIASVVVLFNYEERTQRHYLGHTDCVKCLAIHPDKIRIATGQIAGVDKDGRPLQPHVRVWDSVTLSTLQIIGLGTFERGVGCLDFSKADSGVHLCIIDDSNEHMLTVWDWQKKAKGAEIKTTNEVVLAVEFHPTDANTIITCGKSHIFFWTWSGNSLTRKQGIFGKYEKPKFVQCLAFLGNGDVLTGDSGGVMLIWSKTTVEPTPGKGPKGVYQISKQIKAHDGSVFTLCQMRNGMLLTGGGKDRKIILWDHDLNPEREIEVPDQYGTIRAVAEGKADQFLVGTSRNFILRGTFNDGFQIEVQGHTDELWGLATHPFKDLLLTCAQDRQVCLWNSMEHRLEWTRLVDEPGHCADFHPSGTVVAIGTHSGRWFVLDAETRDLVSIHTDGNEQLSVMRYSIDGTFLAVGSHDNFIYLYVVSENGRKYSRYGRCTGHSSYITHLDWSPDNKYIMSNSGDYEILYWDIPNGCKLIRNRSDCKDIDWTTYTCVLGFQVFGVWPEGSDGTDINALVRSHNRKVIAVADDFCKVHLFQYPCSKAKAPSHKYSAHSSHVTNVSFTHNDSHLISTGGKDMSIIQWKLVEKLSLPQNETVADTTLTKAPVSSTESVIQSNTPTPPPSQPLNETAEEESRISSSPTLLENSLEQTVEPSEDHSEEESEEGSGDLGEPLYEEPCNEISKEQAKATLLEDQQDPSPSS.

An N-acetylmethionine modification is found at Met1. 2 disordered regions span residues 1–20 and 57–205; these read MDGF…TSDV and DHVA…PKLI. Residues 1-249 form a microtubule-binding region; that stretch reads MDGFAGSLDD…IPSDVDNYDD (249 aa). Ser7, Ser13, Ser16, and Ser61 each carry phosphoserine. A coiled-coil region spans residues 14 to 63; that stretch reads AASTSDVQDRLSALESRVQQQEDEITVLKAALADVLRRLAISEDHVASVK. A Phosphothreonine modification is found at Thr96. Positions 114–134 are enriched in basic and acidic residues; the sequence is GTEKKKEKPQGQREKKEESHS. Ser134 bears the Phosphoserine; by NEK7 mark. The segment covering 137–155 has biased composition (low complexity); the sequence is QSPQIRASPSPQPSSQPLQ. Residue Ser144 is modified to Phosphoserine; by NEK6. Ser146 carries the post-translational modification Phosphoserine; by NEK7. At Ser171 the chain carries Phosphoserine. Over residues 176–193 the composition is skewed to basic and acidic residues; it reads SPAEKSHNSWENSDDSRN. Ser200 carries the post-translational modification Phosphoserine. Thr201 carries the phosphothreonine modification. A Phosphotyrosine modification is found at Tyr226. Thr237 bears the Phosphothreonine mark. WD repeat units follow at residues 259 to 297, 301 to 348, 356 to 396, 403 to 438, and 445 to 484; these read LKLE…LFNY, TQRH…VWDS, IIGL…VWDW, AEIK…FWTW, and RKQG…IWSK. Thr490 bears the Phosphothreonine; by NEK6 mark. 8 WD repeats span residues 500 to 538, 543 to 579, 582 to 621, 625 to 662, 668 to 704, 711 to 750, 760 to 818, and 825 to 864; these read QISK…LWDH, EREI…LRGT, DGFQ…LWNS, RLEW…VLDA, VSIH…LYVV, YSRY…YWDI, RSDC…LFQY, and APSH…QWKL. Position 609 is a phosphothreonine; by NEK6 and NEK7 (Thr609). A compositionally biased stretch (polar residues) spans 881-893; the sequence is LTKAPVSSTESVI. The interval 881-981 is disordered; sequence LTKAPVSSTE…EDQQDPSPSS (101 aa). 2 positions are modified to phosphoserine: Ser891 and Ser895. Phosphothreonine is present on residues Thr897 and Thr899. Ser903 carries the phosphoserine modification. Positions 916–931 are enriched in polar residues; sequence ISSSPTLLENSLEQTV. Over residues 937–946 the composition is skewed to acidic residues; sequence HSEEESEEGS. Ser978 carries the phosphoserine modification. The residue at position 981 (Ser981) is a Phosphoserine; by NEK6 and NEK7.

Belongs to the WD repeat EMAP family. In terms of assembly, homotrimer; self-association is mediated by the N-terminal coiled coil. Interacts (via WD repeats) with NUDC. Interacts with alpha- and beta-tubulin during mitosis. In terms of processing, phosphorylated during mitosis. Phosphorylation at Ser-144 and Ser-146 promotes its dissociation from microtubules during mitosis which is required for efficient chromosome congression.

Its subcellular location is the cytoplasm. The protein localises to the cytoskeleton. It localises to the spindle. It is found in the microtubule organizing center. The protein resides in the midbody. Functionally, essential for the formation and stability of microtubules (MTs). Required for the organization of the mitotic spindle and for the proper attachment of kinetochores to MTs. Promotes the recruitment of NUDC to the mitotic spindle for mitotic progression. In Homo sapiens (Human), this protein is Echinoderm microtubule-associated protein-like 4 (EML4).